We begin with the raw amino-acid sequence, 163 residues long: ATP synthase subunit b 1 (163 aa).

Residues 7–27 (AETWVAIAFVILMGIFAYLGV) form a helical membrane-spanning segment.

This sequence belongs to the ATPase B chain family. In terms of assembly, F-type ATPases have 2 components, F(1) - the catalytic core - and F(0) - the membrane proton channel. F(1) has five subunits: alpha(3), beta(3), gamma(1), delta(1), epsilon(1). F(0) has three main subunits: a(1), b(2) and c(10-14). The alpha and beta chains form an alternating ring which encloses part of the gamma chain. F(1) is attached to F(0) by a central stalk formed by the gamma and epsilon chains, while a peripheral stalk is formed by the delta and b chains.

It is found in the cell inner membrane. In terms of biological role, f(1)F(0) ATP synthase produces ATP from ADP in the presence of a proton or sodium gradient. F-type ATPases consist of two structural domains, F(1) containing the extramembraneous catalytic core and F(0) containing the membrane proton channel, linked together by a central stalk and a peripheral stalk. During catalysis, ATP synthesis in the catalytic domain of F(1) is coupled via a rotary mechanism of the central stalk subunits to proton translocation. Component of the F(0) channel, it forms part of the peripheral stalk, linking F(1) to F(0). The sequence is that of ATP synthase subunit b 1 from Rhodopseudomonas palustris (strain HaA2).